The primary structure comprises 727 residues: Telomere repeats-binding bouquet formation protein 1 (727 aa).

ARM repeat units follow at residues 101-144 (ELFE…RETG) and 339-382 (NGLP…GEYP). Residues 398–446 (ENNLEEHWRKAKEILHRIEQLEREGNEEEIQRENYQDNISSMNISIQNT) adopt a coiled-coil conformation. The span at 457-468 (RGSKAEDEDKSH) shows a compositional bias: basic and acidic residues. The segment at 457–493 (RGSKAEDEDKSHSRQLQSYKSHGVMSKACTNDDQMKT) is disordered. Residues 523 to 662 (QNLHEETTFE…QRLSNESTTP (140 aa)) are interaction with TERF1. A Phosphothreonine modification is found at Thr-648. The region spanning 666 to 719 (KKRRIRKNFTEEEVNYLFNGVKKMGNHWNSILWSFPFQQGRKAVDLAHKYHKLT) is the Myb-like domain.

The protein belongs to the TERB1 family. Component of the MAJIN-TERB1-TERB2 complex, composed of MAJIN, TERB1 and TERB2. Interacts with TERF1, STAG3 and SUN1. Interacts (via Myb-like domain) with the cohesin complex; probably mediated via interaction with STAG3. Post-translationally, phosphorylated by CDK. Phosphorylation by CDK takes place in late prophase when the cap exchange is prominent. is important for the stabilization of telomere attachment but dispenable for the cap exchange.

The protein localises to the chromosome. Its subcellular location is the telomere. It is found in the nucleus inner membrane. Meiosis-specific telomere-associated protein involved in meiotic telomere attachment to the nucleus inner membrane, a crucial step for homologous pairing and synapsis. Component of the MAJIN-TERB1-TERB2 complex, which promotes telomere cap exchange by mediating attachment of telomeric DNA to the inner nuclear membrane and replacement of the protective cap of telomeric chromosomes: in early meiosis, the MAJIN-TERB1-TERB2 complex associates with telomeric DNA and the shelterin/telosome complex. During prophase, the complex matures and promotes release of the shelterin/telosome complex from telomeric DNA. In the MAJIN-TERB1-TERB2 complex, TERB1 probably mediates association with the shelterin/telosome complex via interaction with TERF1, promoting priming telomeric DNA attachment'. Promotes telomere association with the nuclear envelope and deposition of the SUN-KASH/LINC complex. Also recruits cohesin to telomeres to develop structural rigidity. This Homo sapiens (Human) protein is Telomere repeats-binding bouquet formation protein 1.